A 289-amino-acid polypeptide reads, in one-letter code: MRKIKKAIIPAAGLGTRFLPATKAMPKEMLPILDKPTIQYIVEEAARAGIEDIIIVTGKHKRAIEDHFDNQKELEMILQEKGKTDLLEKVKYSTELANIFYVRQKEQKGLGHAIYSARQFIGDEPFAVLLGDDIVESDNPAIKQLIEAYEETGKSVIGVQEVDEAQTHRYGIIDPLQKFGRKYEVNEFVEKPKQGTAPSNLAIMGRYVLTPDIFDYLATQGEGAGGEIQLTDAIERLNRADQVYAYDFEGDRYDVGEKLGFVKTTIEYALKDESMHDELVEFIKKLKLN.

It belongs to the UDPGP type 2 family.

The enzyme catalyses alpha-D-glucose 1-phosphate + UTP + H(+) = UDP-alpha-D-glucose + diphosphate. It functions in the pathway glycolipid metabolism; diglucosyl-diacylglycerol biosynthesis. In terms of biological role, catalyzes the formation of UDP-glucose from glucose-1-phosphate and UTP. This is an intermediate step in the biosynthesis of diglucosyl-diacylglycerol (Glc2-DAG), i.e. a glycolipid found in the membrane, which is also used as a membrane anchor for lipoteichoic acid (LTA). This is UTP--glucose-1-phosphate uridylyltransferase 2 (gtaB2) from Staphylococcus saprophyticus subsp. saprophyticus (strain ATCC 15305 / DSM 20229 / NCIMB 8711 / NCTC 7292 / S-41).